The following is a 180-amino-acid chain: MEQFHATTIFAVQHNGSVAMAGDGQVTFGNSMVMKHGAKKVRRLYRGEVLAGFAGSVADAITLFEKFEGKLEEYHGNLQRAAVELAKEWRMDKILRRLEAMMIVANKEHLLLISGNGEIIEPDDGILAIGSGGSFALAAGRALKTYAPHLGAREIAEASLRTAAEICVFTNNNLVVDELN.

Threonine 7 is an active-site residue. Residues alanine 164, cysteine 167, and threonine 170 each contribute to the Na(+) site.

The protein belongs to the peptidase T1B family. HslV subfamily. As to quaternary structure, a double ring-shaped homohexamer of HslV is capped on each side by a ring-shaped HslU homohexamer. The assembly of the HslU/HslV complex is dependent on binding of ATP.

It is found in the cytoplasm. It catalyses the reaction ATP-dependent cleavage of peptide bonds with broad specificity.. Allosterically activated by HslU binding. In terms of biological role, protease subunit of a proteasome-like degradation complex believed to be a general protein degrading machinery. The polypeptide is ATP-dependent protease subunit HslV (Brevibacillus brevis (strain 47 / JCM 6285 / NBRC 100599)).